The chain runs to 292 residues: Ribosomal RNA small subunit methyltransferase A (292 aa).

S-adenosyl-L-methionine contacts are provided by Asn28, Leu30, Gly55, Glu76, Asp101, and Asn126.

The protein belongs to the class I-like SAM-binding methyltransferase superfamily. rRNA adenine N(6)-methyltransferase family. RsmA subfamily.

It localises to the cytoplasm. It carries out the reaction adenosine(1518)/adenosine(1519) in 16S rRNA + 4 S-adenosyl-L-methionine = N(6)-dimethyladenosine(1518)/N(6)-dimethyladenosine(1519) in 16S rRNA + 4 S-adenosyl-L-homocysteine + 4 H(+). Functionally, specifically dimethylates two adjacent adenosines (A1518 and A1519) in the loop of a conserved hairpin near the 3'-end of 16S rRNA in the 30S particle. May play a critical role in biogenesis of 30S subunits. The polypeptide is Ribosomal RNA small subunit methyltransferase A (Bacillus cereus (strain G9842)).